A 360-amino-acid chain; its full sequence is Type II methyltransferase M.BglII (360 aa).

A disordered region spans residues 316–341; it reads TRQRKGSKPSLDSKAHPEEHHKKEIV. The span at 326 to 341 shows a compositional bias: basic and acidic residues; that stretch reads LDSKAHPEEHHKKEIV.

The protein belongs to the N(4)/N(6)-methyltransferase family. N(4) subfamily.

The catalysed reaction is a 2'-deoxycytidine in DNA + S-adenosyl-L-methionine = an N(4)-methyl-2'-deoxycytidine in DNA + S-adenosyl-L-homocysteine + H(+). Its function is as follows. A beta subtype methylase, recognizes the double-stranded sequence 5'-AGATCT-3', methylates C-5 on both strands, and protects the DNA from cleavage by the BglII endonuclease. This chain is Type II methyltransferase M.BglII, found in Bacillus subtilis.